The primary structure comprises 61 residues: Bacteriocin sakacin-P (61 aa).

A propeptide spanning residues Met1–Gly18 is cleaved from the precursor. A disulfide bridge connects residues Cys27 and Cys32.

This sequence belongs to the bacteriocin class IIA/YGNGV family.

It localises to the secreted. Bactericidal activity; inhibits closely related Lactobacilli, Listeria monocytogenes and ivanovvi, Enterococcus faecalis, Carnobacterium sp and Brocothrix thermosphacta. In Latilactobacillus sakei (Lactobacillus sakei), this protein is Bacteriocin sakacin-P (sakP).